A 625-amino-acid polypeptide reads, in one-letter code: Cytoskeleton-associated protein 2 (625 aa).

2 stretches are compositionally biased toward polar residues: residues 1–22 (MSTP…QSAF) and 107–128 (NELT…NQTL). Disordered regions lie at residues 1 to 27 (MSTP…EQRR), 104 to 138 (KPSN…DDPQ), and 153 to 173 (NSKK…VPKK). The segment covering 159–170 (VITEKPKHDANV) has biased composition (basic and acidic residues). S190 is modified (phosphoserine). Disordered stretches follow at residues 195–237 (LQVK…SHMT), 259–282 (SQHN…VTVQ), 322–398 (RPAS…QNEQ), and 484–521 (SGKL…TPST). 2 stretches are compositionally biased toward basic and acidic residues: residues 359–373 (ETAE…EWKA) and 500–514 (DCEK…DPTS). Phosphothreonine occurs at positions 518 and 521. Phosphoserine is present on S534. T535 and T536 each carry phosphothreonine. Position 538 is a phosphotyrosine (Y538). S541 bears the Phosphoserine mark.

This sequence belongs to the CKAP2 family. In terms of assembly, associates with alpha- and beta-tubulins.

The protein localises to the cytoplasm. It localises to the cytoskeleton. Possesses microtubule stabilizing properties. Involved in regulating aneuploidy, cell cycling, and cell death in a p53/TP53-dependent manner. This chain is Cytoskeleton-associated protein 2 (CKAP2), found in Bos taurus (Bovine).